The chain runs to 284 residues: L-fucose dehydrogenase (284 aa).

The NAD(+) site is built by Arg-19, Ile-21, Asp-40, Lys-41, Asp-62, Val-63, Asn-89, Tyr-154, Lys-158, Ile-187, Thr-189, and Leu-191.

Belongs to the short-chain dehydrogenases/reductases (SDR) family.

It carries out the reaction L-fucose + NAD(+) = L-fucono-1,5-lactone + NADH + H(+). The enzyme catalyses D-arabinose + NAD(+) = D-arabinono-1,5-lactone + NADH + H(+). It catalyses the reaction L-galactose + NAD(+) = L-galactono-1,5-lactone + NADH + H(+). Its pathway is carbohydrate degradation; L-fucose degradation. Functionally, catalyzes the NAD(+)-dependent oxidation of L-fucose, yielding L-fucono-1,5-lactone, which rapidly converts spontaneously to L-fucone-1,4-lactone. Can also act on D-arabinose and L-galactose, with lower catalytic efficiency. Does not use NADPH. May be the initial enzyme of the putative L-fucose degradation pathway in mammals. In Oryctolagus cuniculus (Rabbit), this protein is L-fucose dehydrogenase (HSD17B14).